The primary structure comprises 665 residues: MNFMKVYEEFLLTLKNMRPDVIIHNPVMFLTEMSLFLSVFIYAFPGFFGVPSSTTYLQFYLAVVILLFLTVFFSSMSTAMSEGKSKAITDSLKKFKTEVTAHVIRDGNPVDVKSTDLRKGDIIVVYRDEIIPIDGEVIEGSGYVDESNVTGESRAVMKVIGDTVTGSTRLVTDKIKIRATADPGSTFIDKMIDLVNRATREKTPNEIALTVFLSGLTLIFLIITASIFSISHYYGRTANVMMLIVLLIALIPTTIGALLPAIGIAAINKVSEYNIIAKSGRAIENAGDIDTIILDKTGTITIGERQAVRMYPNKGVDDKEFYRMCALASFYDQTKEGISILNLARSNGITVSEEDLRGYSFIPFSSETKYSGLESDSDYIIKGSLHALKEKFHVADEFIEALCKEISMRGGTAIPVVHNGKFAGVIELQDLIKPGIKERIAEIKNMDIKTVMCTGDDEVTAQYISAQVGLDEYIANSKPIDKYNVVIREKERQRMVAMVGDGTNDAPALAKADVGLAMNNGTQAAKEAANMIDLDSNPTKLMDVIFLGKQILITRGALTTFSIANDISKYFVIIPAIFYMFPSLSMVNVLDLTDPIVAVTSALIFNTIIIVFLIPLALGGVKYKPTSISDLLKRNIMIYGLGGVVVPFIAIKLIYMLLVALGVVW.

4 consecutive transmembrane segments (helical) span residues 28–48, 56–76, 207–227, and 244–264; these read MFLTEMSLFLSVFIYAFPGFF, YLQFYLAVVILLFLTVFFSSM, IALTVFLSGLTLIFLIITASI, and IVLLIALIPTTIGALLPAIGI. Catalysis depends on Asp-295, which acts as the 4-aspartylphosphate intermediate. Residues Asp-332, Glu-336, 364 to 371, and Lys-382 each bind ATP; that span reads FSSETKYS. Asp-501 and Asp-505 together coordinate Mg(2+). Helical transmembrane passes span 570 to 590, 596 to 616, and 644 to 664; these read YFVIIPAIFYMFPSLSMVNVL, IVAVTSALIFNTIIIVFLIPL, and VVVPFIAIKLIYMLLVALGVV.

It belongs to the cation transport ATPase (P-type) (TC 3.A.3) family. Type IA subfamily. In terms of assembly, the system is composed of three essential subunits: KdpA, KdpB and KdpC.

Its subcellular location is the cell membrane. The enzyme catalyses K(+)(out) + ATP + H2O = K(+)(in) + ADP + phosphate + H(+). Part of the high-affinity ATP-driven potassium transport (or Kdp) system, which catalyzes the hydrolysis of ATP coupled with the electrogenic transport of potassium into the cytoplasm. This subunit is responsible for energy coupling to the transport system and for the release of the potassium ions to the cytoplasm. The protein is Potassium-transporting ATPase ATP-binding subunit of Thermoplasma acidophilum (strain ATCC 25905 / DSM 1728 / JCM 9062 / NBRC 15155 / AMRC-C165).